The sequence spans 173 residues: ATP-dependent protease subunit HslV (173 aa).

T2 is a catalytic residue. Na(+)-binding residues include G158, D161, and S164.

Belongs to the peptidase T1B family. HslV subfamily. A double ring-shaped homohexamer of HslV is capped on each side by a ring-shaped HslU homohexamer. The assembly of the HslU/HslV complex is dependent on binding of ATP.

It is found in the cytoplasm. It carries out the reaction ATP-dependent cleavage of peptide bonds with broad specificity.. Allosterically activated by HslU binding. Functionally, protease subunit of a proteasome-like degradation complex believed to be a general protein degrading machinery. The polypeptide is ATP-dependent protease subunit HslV (Glaesserella parasuis serovar 5 (strain SH0165) (Haemophilus parasuis)).